A 225-amino-acid chain; its full sequence is Ribosomal RNA small subunit methyltransferase G (225 aa).

S-adenosyl-L-methionine is bound by residues Gly89, Leu94, 140–141, and Arg157; that span reads IE.

This sequence belongs to the methyltransferase superfamily. RNA methyltransferase RsmG family.

It is found in the cytoplasm. The catalysed reaction is guanosine(527) in 16S rRNA + S-adenosyl-L-methionine = N(7)-methylguanosine(527) in 16S rRNA + S-adenosyl-L-homocysteine. Its function is as follows. Specifically methylates the N7 position of guanine in position 527 of 16S rRNA. This is Ribosomal RNA small subunit methyltransferase G from Psychrobacter sp. (strain PRwf-1).